Reading from the N-terminus, the 124-residue chain is CLAVATA3/ESR (CLE)-related protein 45 (124 aa).

Residues 1–20 (MLGSSTRSMFFLLVCIGLLA) form the signal peptide. 2 N-linked (GlcNAc...) asparagine glycosylation sites follow: N25 and N96. Residues 71–109 (LNKNRRVLEEVNKDKIKAEETQERKNKTEDSFKSSKRRV) are a coiled coil. Residues 87 to 103 (KAEETQERKNKTEDSFK) are compositionally biased toward basic and acidic residues. Positions 87 to 124 (KAEETQERKNKTEDSFKSSKRRVRRGSDPIHNKAQPFS) are disordered.

Belongs to the CLV3/ESR signal peptide family. As to quaternary structure, binds to SKM1 present in the pollen grain, particularly under relatively high temperature (at 30 degrees Celsius). Interacts with BAM3, especially in roots. In terms of tissue distribution, expressed at low levels in flowers, especially in pistils. Present in vascular tissues. In roots, confined to protophloem and sieve element precursor cells.

Its subcellular location is the secreted. It is found in the extracellular space. Its function is as follows. Extracellular signal peptide that regulates cell fate. Represses root apical meristem maintenance. Represses protophloem differentiation in a BAM3-dependent manner. BRX, BAM3, and CLE45 act together to regulate the transition of protophloem cells from proliferation to differentiation, thus impinging on postembryonic growth capacity of the root meristem; this signaling pathway requires CRN and CLV2 and involves MAKR5 for its transduction/amplification. Triggers the accumulation of MAKR5 in developing sieve elements in a BAM3-dependent manner. Prevents, in a dose-dependent manner, auxin response in the root meristem thus leading in the repression of protophloem differentiation and periclinal sieve element precursor cell division. Promotes pollen tube growth prolongation in a SKM1 and SKM2-dependent manner, especially under relatively high temperature (at 30 degrees Celsius), thus conferring tolerance against high temperature probably through the maintenance of mitochondrial activity. Alleviates mitochondrial decay pollen tube in vitro culture. The chain is CLAVATA3/ESR (CLE)-related protein 45 from Arabidopsis thaliana (Mouse-ear cress).